Reading from the N-terminus, the 689-residue chain is tRNA 5-methylaminomethyl-2-thiouridine biosynthesis bifunctional protein MnmC (689 aa).

The interval 1–245 (MNQRPIQTAT…KREMLTGTLP (245 aa)) is tRNA (mnm(5)s(2)U34)-methyltransferase. Positions 270 to 689 (IGGGIVSALT…RSPATQESSR (420 aa)) are FAD-dependent cmnm(5)s(2)U34 oxidoreductase.

It in the N-terminal section; belongs to the methyltransferase superfamily. tRNA (mnm(5)s(2)U34)-methyltransferase family. In the C-terminal section; belongs to the DAO family. FAD is required as a cofactor.

It localises to the cytoplasm. The catalysed reaction is 5-aminomethyl-2-thiouridine(34) in tRNA + S-adenosyl-L-methionine = 5-methylaminomethyl-2-thiouridine(34) in tRNA + S-adenosyl-L-homocysteine + H(+). Functionally, catalyzes the last two steps in the biosynthesis of 5-methylaminomethyl-2-thiouridine (mnm(5)s(2)U) at the wobble position (U34) in tRNA. Catalyzes the FAD-dependent demodification of cmnm(5)s(2)U34 to nm(5)s(2)U34, followed by the transfer of a methyl group from S-adenosyl-L-methionine to nm(5)s(2)U34, to form mnm(5)s(2)U34. The chain is tRNA 5-methylaminomethyl-2-thiouridine biosynthesis bifunctional protein MnmC from Yersinia pseudotuberculosis serotype I (strain IP32953).